The sequence spans 338 residues: Lipoate-protein ligase A (338 aa).

The region spanning 29–216 is the BPL/LPL catalytic domain; sequence PATQRVLFLW…AFFAHYGEHV (188 aa). ATP contacts are provided by residues R71, 76 to 79, and K134; that span reads GAVF. (R)-lipoate is bound at residue K134.

The protein belongs to the LplA family. As to quaternary structure, monomer.

Its subcellular location is the cytoplasm. The enzyme catalyses L-lysyl-[lipoyl-carrier protein] + (R)-lipoate + ATP = N(6)-[(R)-lipoyl]-L-lysyl-[lipoyl-carrier protein] + AMP + diphosphate + H(+). Its pathway is protein modification; protein lipoylation via exogenous pathway; protein N(6)-(lipoyl)lysine from lipoate: step 1/2. The protein operates within protein modification; protein lipoylation via exogenous pathway; protein N(6)-(lipoyl)lysine from lipoate: step 2/2. In terms of biological role, catalyzes both the ATP-dependent activation of exogenously supplied lipoate to lipoyl-AMP and the transfer of the activated lipoyl onto the lipoyl domains of lipoate-dependent enzymes. This is Lipoate-protein ligase A from Escherichia coli O17:K52:H18 (strain UMN026 / ExPEC).